Consider the following 225-residue polypeptide: Ribosome maturation factor RimM (225 aa).

A PRC barrel domain is found at 144–225; that stretch reads ADEFYWVDLI…RIVVDWEADY (82 aa).

It belongs to the RimM family. Binds ribosomal protein uS19.

The protein localises to the cytoplasm. In terms of biological role, an accessory protein needed during the final step in the assembly of 30S ribosomal subunit, possibly for assembly of the head region. Essential for efficient processing of 16S rRNA. May be needed both before and after RbfA during the maturation of 16S rRNA. It has affinity for free ribosomal 30S subunits but not for 70S ribosomes. This is Ribosome maturation factor RimM from Burkholderia orbicola (strain MC0-3).